Here is a 711-residue protein sequence, read N- to C-terminus: L-type lectin-domain containing receptor kinase VIII.2 (711 aa).

Positions 1 to 30 (MLKLPPRFFSVYSTLIHILASFLCSSDVRG) are cleaved as a signal peptide. Topologically, residues 31–315 (DFPATRFDLG…NKLCKKSPAA (285 aa)) are extracellular. Residues 35–260 (TRFDLGTLTL…IHSVDWWSFS (226 aa)) form a legume-lectin like region. N-linked (GlcNAc...) asparagine glycosylation is present at asparagine 57. A disordered region spans residues 265 to 306 (ESSESPPPMPNSPPPSSPSSSITPSLSTVRRKTADPSSSCRN). The span at 269-281 (SPPPMPNSPPPSS) shows a compositional bias: pro residues. A compositionally biased stretch (low complexity) spans 282 to 291 (PSSSITPSLS). A helical membrane pass occupies residues 316-336 (VAGVVTAGAFFLALFAGVIIW). The Cytoplasmic portion of the chain corresponds to 337 to 711 (VYSKKIKYTR…IFIVGKDRSV (375 aa)). Residues 374 to 656 (FSSSRVIGNG…LVGEADVPEV (283 aa)) form the Protein kinase domain. ATP contacts are provided by residues 380–388 (IGNGAFGTV) and lysine 403. The active-site Proton acceptor is aspartate 497.

It in the C-terminal section; belongs to the protein kinase superfamily. Ser/Thr protein kinase family. The protein in the N-terminal section; belongs to the leguminous lectin family.

Its subcellular location is the cell membrane. The catalysed reaction is L-seryl-[protein] + ATP = O-phospho-L-seryl-[protein] + ADP + H(+). The enzyme catalyses L-threonyl-[protein] + ATP = O-phospho-L-threonyl-[protein] + ADP + H(+). Involved in resistance response to the pathogenic oomycetes Phytophthora infestans and Phytophthora capsici. This chain is L-type lectin-domain containing receptor kinase VIII.2, found in Arabidopsis thaliana (Mouse-ear cress).